We begin with the raw amino-acid sequence, 386 residues long: Centrosomal protein of 44 kDa (386 aa).

The binds with microtubules and centrioles stretch occupies residues 11–194 (RKLEQVLRSL…GVPEGTVTST (184 aa)). Positions 232–262 (ELTALQIALAECQEKLKKLTWIEKRLECLEA) form a coiled coil. At serine 329 the chain carries Phosphoserine. The stretch at 359-382 (SEETTMQKMERMKKMFEETAELLK) forms a coiled coil.

In terms of assembly, interacts with CROCC. Interacts with POC1B; the interaction is direct and recruits POC1B to centriolar microtubules. Binds to centriolar microtubules.

The protein resides in the cytoplasm. Its subcellular location is the cytoskeleton. The protein localises to the microtubule organizing center. It is found in the centrosome. It localises to the centriole. The protein resides in the spindle pole. Its subcellular location is the midbody. Its function is as follows. Centriole-enriched microtubule-binding protein involved in centriole biogenesis. In collaboration with CEP295 and POC1B, is required for the centriole-to-centrosome conversion by ensuring the formation of bona fide centriole wall. Functions as a linker component that maintains centrosome cohesion. Associates with CROCC and regulates its stability and localization to the centrosome. The protein is Centrosomal protein of 44 kDa (Cep44) of Rattus norvegicus (Rat).